A 156-amino-acid polypeptide reads, in one-letter code: uncharacterized protein (156 aa).

This is an uncharacterized protein from Schizosaccharomyces pombe (strain 972 / ATCC 24843) (Fission yeast).